We begin with the raw amino-acid sequence, 61 residues long: Furostanol glycoside 26-O-beta-glucosidase (61 aa).

The active-site Proton donor/acceptor is the Asp33. Asp33 contributes to the D-glucose binding site.

This sequence belongs to the glycosyl hydrolase 3 family. In terms of assembly, monomer. Post-translationally, glycosylated. As to expression, expressed in petioles and leaves, but not in fruits.

It catalyses the reaction protodioscin + H2O = 26-deglucoprotodioscin + D-glucose. With respect to regulation, inhibited by Hg(2+) and D-glucono-1,5-lactone. Functionally, beta-glucosidase highly specific for the cleavage of C-26-bound glucose moiety of furostanol glycosides torvosides A and H. Hydrolyzes only p-nitrophenyl-beta-glucoside, but not p-nitrophenyl-beta-D-fucoside, p-nitrophenyl-beta-L-fucoside, p-nitrophenyl-beta-D-xyloside, p-nitrophenyl-beta-D-galactoside, p-nitrophenyl-beta-D-NAc-glucosamine, p-nitrophenyl-beta-D-mannoside or any of the p-nitrophenyl-alpha-glycosides tested. In Solanum torvum (Turkey berry), this protein is Furostanol glycoside 26-O-beta-glucosidase.